The primary structure comprises 682 residues: Putative protein RhsE (682 aa).

A compositionally biased stretch (basic and acidic residues) spans 348-360; it reads ENGEREKAQRRSL. The interval 348–372 is disordered; it reads ENGEREKAQRRSLAETLQQEGSENG.

This sequence belongs to the RHS family.

Rhs elements have a nonessential function. They may play an important role in the natural ecology of the cell. This chain is Putative protein RhsE (rhsE), found in Escherichia coli (strain K12).